Consider the following 491-residue polypeptide: Endoglucanase 14 (491 aa).

Residues 1 to 31 (MSQLKIGSSQCLWTSICIVLFVLSMARGAVS) form the signal peptide. The active-site Nucleophile is Asp86. Asn397 is a glycosylation site (N-linked (GlcNAc...) asparagine). Active-site residues include His413, Asp465, and Glu474.

Belongs to the glycosyl hydrolase 9 (cellulase E) family.

It localises to the secreted. It carries out the reaction Endohydrolysis of (1-&gt;4)-beta-D-glucosidic linkages in cellulose, lichenin and cereal beta-D-glucans.. This Arabidopsis thaliana (Mouse-ear cress) protein is Endoglucanase 14.